A 367-amino-acid chain; its full sequence is Probable ATP-dependent RNA helicase MJ0669 (367 aa).

The short motif at 6–34 (MNFNELNLSDNILNAIRNKGFEKPTDIQM) is the Q motif element. In terms of domain architecture, Helicase ATP-binding spans 38–206 (PLFLNDEYNI…KKYMGDYSFI (169 aa)). Residue 51-58 (ARTGSGKT) participates in ATP binding. Residues 154-157 (DEAD) carry the DEAD box motif. Positions 213–367 (NIEQSYVEVN…KLKIKKLKFG (155 aa)) constitute a Helicase C-terminal domain.

Belongs to the DEAD box helicase family. In terms of assembly, homodimer.

The catalysed reaction is ATP + H2O = ADP + phosphate + H(+). The protein is Probable ATP-dependent RNA helicase MJ0669 of Methanocaldococcus jannaschii (strain ATCC 43067 / DSM 2661 / JAL-1 / JCM 10045 / NBRC 100440) (Methanococcus jannaschii).